We begin with the raw amino-acid sequence, 353 residues long: BLOC-1-related complex subunit 6 (353 aa).

Positions 23 to 194 (AIFGDGPGQT…SGAGGGRRAT (172 aa)) are disordered. The segment covering 102-126 (FDLHGSSRRKDPEPPEAKPESERVC) has biased composition (basic and acidic residues). Residues S130 and S166 each carry the phosphoserine modification. The span at 172-191 (GACGGPASSGGAESGAGGGR) shows a compositional bias: gly residues. Phosphothreonine is present on T194. Residue S197 is modified to Phosphoserine. Positions 225-253 (LSGAPQPPPPAPTRPCSAPTPTPAIPPID) are disordered. Over residues 229–253 (PQPPPPAPTRPCSAPTPTPAIPPID) the composition is skewed to pro residues.

Belongs to the BORCS6 family. As to quaternary structure, component of the BLOC-one-related complex (BORC) which is composed of BLOC1S1, BLOC1S2, BORCS5, BORCS6, BORCS7, BORCS8, KXD1 and SNAPIN.

It is found in the lysosome membrane. Its function is as follows. As part of the BORC complex may play a role in lysosomes movement and localization at the cell periphery. Associated with the cytosolic face of lysosomes, the BORC complex may recruit ARL8B and couple lysosomes to microtubule plus-end-directed kinesin motor. The chain is BLOC-1-related complex subunit 6 from Bos taurus (Bovine).